We begin with the raw amino-acid sequence, 547 residues long: Sodium-coupled neutral amino acid transporter 4 (547 aa).

The interval 1 to 34 is disordered; sequence MDPMELNNVSIEPDGDSCSGDSIQDSYTGMENSD. At 1–104 the chain is on the extracellular side; sequence MDPMELNNVS…GLSYAMANTG (104 aa). A compositionally biased stretch (polar residues) spans 19–31; sequence SGDSIQDSYTGME. Ser-49 is subject to Phosphoserine. Residues 105-125 traverse the membrane as a helical segment; sequence IILFIIMLLTVAILSLYSVHL. Over 126–151 the chain is Cytoplasmic; that stretch reads LLKTAKEGGSLIYEKLGEKAFGWPGK. A helical transmembrane segment spans residues 152-172; that stretch reads IGAFISITMQNIGAMSSYLFI. Residues 173–195 are Extracellular-facing; it reads IKYELPEVIRAFMGLEENTGEWY. A helical transmembrane segment spans residues 196–216; the sequence is LNGNYLVLFVSVGIILPLSLL. Residues 217 to 220 are Cytoplasmic-facing; sequence KNLG. Residues 221–241 traverse the membrane as a helical segment; the sequence is YLGYTSGFSLSCMVFFVSVVI. The Extracellular portion of the chain corresponds to 242-332; the sequence is YKKFQIPCPL…PKYFVFNSRT (91 aa). A disulfide bridge links Cys-249 with Cys-321. Asn-260, Asn-264, and Asn-276 each carry an N-linked (GlcNAc...) asparagine glycan. The chain crosses the membrane as a helical span at residues 333–353; the sequence is AYAIPILAFAFVCHPEVLPIY. The Cytoplasmic segment spans residues 354-369; that stretch reads SELKDRSRRKMQTVSN. A helical membrane pass occupies residues 370 to 390; sequence ISISGMLVMYLLAALFGYLSF. The Extracellular segment spans residues 391-411; the sequence is YGDVEDELLHAYSKVYTFDTA. Residues 412-432 form a helical membrane-spanning segment; it reads LLMVRLAVLVAVTLTVPIVLF. Residues 433 to 453 are Cytoplasmic-facing; it reads PIRTSVITLLFPRKPFSWLKH. A helical membrane pass occupies residues 454–474; it reads FGIAAIIIALNNILVILVPTI. Over 475-476 the chain is Extracellular; the sequence is KY. A helical transmembrane segment spans residues 477–497; the sequence is IFGFIGASSATMLIFILPAAF. Residues 498–514 lie on the Cytoplasmic side of the membrane; that stretch reads YLKLVKKEPLRSPQKIG. Residues 515-535 form a helical membrane-spanning segment; sequence ALVFLVTGIIFMMGSMALIIL. Over 536-547 the chain is Extracellular; sequence DWIYNPPNPNHH.

Belongs to the amino acid/polyamine transporter 2 family. The disulfide bond plays an important role in substrate transport, but has no effect on trafficking to the cell surface. Detected in liver, in hepatocytes surrounding the central vein. Not detected in heart, kidney, brain, lung, small intestine, spleen and thymus. Highly expressed in placenta.

Its subcellular location is the cell membrane. It is found in the cell projection. The protein localises to the microvillus membrane. The enzyme catalyses L-alanine(in) + Na(+)(in) = L-alanine(out) + Na(+)(out). It catalyses the reaction L-methionine(in) + Na(+)(in) = L-methionine(out) + Na(+)(out). It carries out the reaction L-asparagine(in) + Na(+)(in) = L-asparagine(out) + Na(+)(out). The catalysed reaction is L-threonine(in) + Na(+)(in) = L-threonine(out) + Na(+)(out). The enzyme catalyses L-serine(in) + Na(+)(in) = L-serine(out) + Na(+)(out). It catalyses the reaction glycine(in) + Na(+)(in) = glycine(out) + Na(+)(out). It carries out the reaction L-glutamine(in) + Na(+)(in) = L-glutamine(out) + Na(+)(out). The catalysed reaction is L-histidine(in) + Na(+)(in) = L-histidine(out) + Na(+)(out). The enzyme catalyses L-cysteine(in) + Na(+)(in) = L-cysteine(out) + Na(+)(out). It catalyses the reaction L-proline(in) + Na(+)(in) = L-proline(out) + Na(+)(out). In terms of biological role, symporter that cotransports neutral amino acids and sodium ions from the extraccellular to the intracellular side of the cell membrane. The transport is electrogenic, pH dependent and partially tolerates substitution of Na(+) by Li(+). Preferentially transports smaller amino acids, such as glycine, L-alanine, L-serine, L-asparagine and L-threonine, followed by L-cysteine, L-histidine, L-proline and L-glutamine and L-methionine. The sequence is that of Sodium-coupled neutral amino acid transporter 4 from Mus musculus (Mouse).